A 44-amino-acid polypeptide reads, in one-letter code: Photosystem I reaction center subunit IX (44 aa).

The helical transmembrane segment at 7–27 (YLSVAPVLTTLWFGSLAGLLI) threads the bilayer.

It belongs to the PsaJ family.

The protein resides in the plastid. It is found in the chloroplast thylakoid membrane. Functionally, may help in the organization of the PsaE and PsaF subunits. The polypeptide is Photosystem I reaction center subunit IX (Drimys granadensis).